Consider the following 548-residue polypeptide: Zinc metalloproteinase (548 aa).

The signal sequence occupies residues 1-28 (MKKYYAVTGIALAVGMLCTTQLAGATQA). A Zn(2+)-binding site is contributed by His-362. Glu-363 is a catalytic residue. Zn(2+) contacts are provided by His-366 and Glu-386. Residues 440–459 (SNWKPTATNPNDNNDQGGVH) are disordered. Over residues 442-459 (WKPTATNPNDNNDQGGVH) the composition is skewed to polar residues. Catalysis depends on His-459, which acts as the Proton donor.

Belongs to the peptidase M4 family. Ca(2+) serves as cofactor. The cofactor is Zn(2+).

Its subcellular location is the secreted. It localises to the cell wall. In terms of biological role, zinc metalloprotease with hemolytic properties. This Renibacterium salmoninarum protein is Zinc metalloproteinase (hly).